A 290-amino-acid polypeptide reads, in one-letter code: Acetylglutamate kinase (290 aa).

Substrate contacts are provided by residues 60-61 (GG), arginine 82, and asparagine 187.

The protein belongs to the acetylglutamate kinase family. ArgB subfamily.

The protein resides in the cytoplasm. The enzyme catalyses N-acetyl-L-glutamate + ATP = N-acetyl-L-glutamyl 5-phosphate + ADP. The protein operates within amino-acid biosynthesis; L-arginine biosynthesis; N(2)-acetyl-L-ornithine from L-glutamate: step 2/4. Functionally, catalyzes the ATP-dependent phosphorylation of N-acetyl-L-glutamate. The polypeptide is Acetylglutamate kinase (Marinobacter nauticus (strain ATCC 700491 / DSM 11845 / VT8) (Marinobacter aquaeolei)).